Reading from the N-terminus, the 380-residue chain is Flap endonuclease 1 (380 aa).

Residues 1–104 (MGIQGLAKLI…GELAKRSERR (104 aa)) are N-domain. Residue Arg-19 is modified to Symmetric dimethylarginine; by PRMT5. Asp-34 serves as a coordination point for Mg(2+). Residues Arg-47 and Arg-70 each contribute to the DNA site. The residue at position 80 (Lys-80) is an N6-acetyllysine. A Mg(2+)-binding site is contributed by Asp-86. Symmetric dimethylarginine; by PRMT5 occurs at positions 100 and 104. The interval 122–253 (EVEKFTKRLV…KRAVDLIQKH (132 aa)) is I-domain. Mg(2+)-binding residues include Glu-158, Glu-160, Asp-179, and Asp-181. DNA is bound at residue Glu-158. Ser-187 carries the post-translational modification Phosphoserine; by CDK2. A Symmetric dimethylarginine; by PRMT5 modification is found at Arg-192. Ser-197 is modified (phosphoserine). Positions 231 and 233 each coordinate DNA. Asp-233 is a Mg(2+) binding site. Phosphoserine is present on residues Ser-255, Ser-293, and Ser-335. The tract at residues 327–380 (RLSKSRQGSTQGRLDDFFKVTGSLSSAKRKEPEPKGSTKKKAKTGAAGKFKRGK) is disordered. Thr-336 bears the Phosphothreonine mark. The segment at 336 to 344 (TQGRLDDFF) is interaction with PCNA. An N6-acetyllysine modification is found at Lys-354. The span at 363 to 380 (STKKKAKTGAAGKFKRGK) shows a compositional bias: basic residues. At Thr-364 the chain carries Phosphothreonine. N6-acetyllysine occurs at positions 375, 377, and 380.

This sequence belongs to the XPG/RAD2 endonuclease family. FEN1 subfamily. Interacts with PCNA. Three molecules of FEN1 bind to one PCNA trimer with each molecule binding to one PCNA monomer. PCNA stimulates the nuclease activity without altering cleavage specificity. The C-terminal domain binds EP300; can bind simultaneously to both PCNA and EP300. Interacts with DDX11; this interaction is direct and increases flap endonuclease activity of FEN1. Interacts with WDR4; regulating its endonuclease activity. Interacts with POLB. The cofactor is Mg(2+). In terms of processing, acetylated by EP300. Acetylation inhibits both endonuclease and exonuclease activity. Acetylation also reduces DNA-binding activity but does not affect interaction with PCNA or EP300. Post-translationally, phosphorylation upon DNA damage induces relocalization to the nuclear plasma. Phosphorylation at Ser-187 by CDK2 occurs during late S-phase and results in dissociation from PCNA. Methylation at Arg-192 by PRMT5 impedes Ser-187 phosphorylation and increases interaction with PCNA.

It localises to the nucleus. Its subcellular location is the nucleolus. The protein localises to the nucleoplasm. It is found in the mitochondrion. In terms of biological role, structure-specific nuclease with 5'-flap endonuclease and 5'-3' exonuclease activities involved in DNA replication and repair. During DNA replication, cleaves the 5'-overhanging flap structure that is generated by displacement synthesis when DNA polymerase encounters the 5'-end of a downstream Okazaki fragment. It enters the flap from the 5'-end and then tracks to cleave the flap base, leaving a nick for ligation. Also involved in the long patch base excision repair (LP-BER) pathway, by cleaving within the apurinic/apyrimidinic (AP) site-terminated flap. Acts as a genome stabilization factor that prevents flaps from equilibrating into structures that lead to duplications and deletions. Also possesses 5'-3' exonuclease activity on nicked or gapped double-stranded DNA, and exhibits RNase H activity. Also involved in replication and repair of rDNA and in repairing mitochondrial DNA. The protein is Flap endonuclease 1 of Homo sapiens (Human).